The sequence spans 95 residues: Co-chaperonin GroES (95 aa).

It belongs to the GroES chaperonin family. As to quaternary structure, heptamer of 7 subunits arranged in a ring. Interacts with the chaperonin GroEL.

The protein localises to the cytoplasm. Functionally, together with the chaperonin GroEL, plays an essential role in assisting protein folding. The GroEL-GroES system forms a nano-cage that allows encapsulation of the non-native substrate proteins and provides a physical environment optimized to promote and accelerate protein folding. GroES binds to the apical surface of the GroEL ring, thereby capping the opening of the GroEL channel. The chain is Co-chaperonin GroES from Nitratidesulfovibrio vulgaris (strain DSM 19637 / Miyazaki F) (Desulfovibrio vulgaris).